The following is a 512-amino-acid chain: UDP-N-acetylmuramate--L-alanine ligase (512 aa).

Gly132–Thr138 serves as a coordination point for ATP.

This sequence belongs to the MurCDEF family.

It is found in the cytoplasm. The enzyme catalyses UDP-N-acetyl-alpha-D-muramate + L-alanine + ATP = UDP-N-acetyl-alpha-D-muramoyl-L-alanine + ADP + phosphate + H(+). It functions in the pathway cell wall biogenesis; peptidoglycan biosynthesis. Its function is as follows. Cell wall formation. This chain is UDP-N-acetylmuramate--L-alanine ligase, found in Bifidobacterium longum (strain DJO10A).